Reading from the N-terminus, the 218-residue chain is uncharacterized protein (218 aa).

Residues 154–199 (CFICTMEYSRTDKNLHPIILNCGHNLCRSCINKLTGNGIVKCPFDR) form an RING-type zinc finger.

This is an uncharacterized protein from Caenorhabditis elegans.